Here is a 425-residue protein sequence, read N- to C-terminus: Secernin-2 (425 aa).

The active site involves C12. T52 is subject to Phosphothreonine.

It belongs to the peptidase C69 family. Secernin subfamily.

This is Secernin-2 (SCRN2) from Homo sapiens (Human).